The following is a 144-amino-acid chain: Maximins 11/H11 (144 aa).

An N-terminal signal peptide occupies residues 1–18; the sequence is MNFKYIVAVSFLIASAYA. The propeptide occupies 19–43; that stretch reads RSEENDEQSLSQRDVLEEESLREIR. Asparagine 70 carries the asparagine amide modification. A propeptide spanning residues 74 to 123 is cleaved from the precursor; that stretch reads TAEDHEVMKRLEAVMRDLDSLDYPEEASERETRGFNQEEIANLFTKKEKR. An Isoleucine amide modification is found at isoleucine 143.

The protein belongs to the bombinin family. In terms of tissue distribution, expressed by the skin glands.

It is found in the secreted. Its function is as follows. Maximin-11 shows antimicrobial activity against bacteria and against the fungus C.albicans. It has little hemolytic activity. Maximin-H11 shows antimicrobial activity against bacteria and against the fungus C.albicans. Shows strong hemolytic activity. The chain is Maximins 11/H11 from Bombina maxima (Giant fire-bellied toad).